A 420-amino-acid chain; its full sequence is Nucleobindin-2 (420 aa).

Residues 1–24 (MRWRTILLQYCFLLITCLLTALEA) form the signal peptide. The DNA-binding element occupies 171–223 (KTRHEEFKKYEMMKEHERREYLKTLNEEKRKEEESKFEEMKKKHENHPKVNHP). The span at 195–212 (LNEEKRKEEESKFEEMKK) shows a compositional bias: basic and acidic residues. The tract at residues 195–225 (LNEEKRKEEESKFEEMKKKHENHPKVNHPGS) is disordered. The tract at residues 213–420 (KHENHPKVNH…AGELKFEPHI (208 aa)) is binds to necdin. EF-hand domains are found at residues 241–276 (PNDF…ELEK) and 293–328 (ERLR…KEFL). Asp254 and Asn256 together coordinate Ca(2+). Ser257 is modified (phosphoserine). Ca(2+)-binding residues include Asp258, Glu265, Asp306, Asn308, Asp310, and Glu317. The GBA motif lies at 304-334 (EVDTNKDRLVTLEEFLKATEKKEFLEPDSWE). Phosphoserine is present on Ser332. The disordered stretch occupies residues 398 to 420 (QKKLQQGIPPSGPAGELKFEPHI).

This sequence belongs to the nucleobindin family. Interacts (via GBA motif) with guanine nucleotide-binding protein G(i) alpha subunit GNAI3. Preferentially interacts with inactive rather than active GNAI3. Interaction with GNAI3 is inhibited when NUCB2 binds calcium, probably due to a conformational change which renders the GBA motif inaccessible. Binds to the postmitotic growth suppressor NDN; coexpression abolishes NUCB2 secretion. Interacts with MC4R. Predominantly expressed in spleen, testis and normal stomach.

It is found in the golgi apparatus. The protein resides in the membrane. It localises to the cytoplasm. The protein localises to the secreted. Its subcellular location is the endoplasmic reticulum. It is found in the nucleus envelope. Calcium-binding protein which may have a role in calcium homeostasis. Acts as a non-receptor guanine nucleotide exchange factor which binds to and activates guanine nucleotide-binding protein (G-protein) alpha subunit GNAI3. Functionally, anorexigenic peptide, seems to play an important role in hypothalamic pathways regulating food intake and energy homeostasis, acting in a leptin-independent manner. May also exert hypertensive roles and modulate blood pressure through directly acting on peripheral arterial resistance. In intestinal epithelial cells, plays a role in the inhibition of hepatic glucose production via MC4R receptor leading to increased cyclic adenosine monophosphate (cAMP) levels and glucagon-like peptide 1 (GLP-1) secretion. This chain is Nucleobindin-2, found in Homo sapiens (Human).